A 569-amino-acid chain; its full sequence is Arginine--tRNA ligase (569 aa).

Positions 123–133 match the 'HIGH' region motif; sequence ANPNGPLHVGH.

This sequence belongs to the class-I aminoacyl-tRNA synthetase family.

It localises to the cytoplasm. It carries out the reaction tRNA(Arg) + L-arginine + ATP = L-arginyl-tRNA(Arg) + AMP + diphosphate. This is Arginine--tRNA ligase from Methanosarcina mazei (strain ATCC BAA-159 / DSM 3647 / Goe1 / Go1 / JCM 11833 / OCM 88) (Methanosarcina frisia).